The following is a 264-amino-acid chain: Thymidylate synthase (264 aa).

DUMP is bound at residue arginine 21. Histidine 51 is a (6R)-5,10-methylene-5,6,7,8-tetrahydrofolate binding site. 126–127 (RR) contributes to the dUMP binding site. The Nucleophile role is filled by cysteine 146. Residues 166–169 (RSAD), asparagine 177, and 207–209 (HLY) contribute to the dUMP site. (6R)-5,10-methylene-5,6,7,8-tetrahydrofolate is bound at residue aspartate 169. Alanine 263 is a binding site for (6R)-5,10-methylene-5,6,7,8-tetrahydrofolate.

This sequence belongs to the thymidylate synthase family. Bacterial-type ThyA subfamily. As to quaternary structure, homodimer.

It localises to the cytoplasm. The enzyme catalyses dUMP + (6R)-5,10-methylene-5,6,7,8-tetrahydrofolate = 7,8-dihydrofolate + dTMP. It functions in the pathway pyrimidine metabolism; dTTP biosynthesis. In terms of biological role, catalyzes the reductive methylation of 2'-deoxyuridine-5'-monophosphate (dUMP) to 2'-deoxythymidine-5'-monophosphate (dTMP) while utilizing 5,10-methylenetetrahydrofolate (mTHF) as the methyl donor and reductant in the reaction, yielding dihydrofolate (DHF) as a by-product. This enzymatic reaction provides an intracellular de novo source of dTMP, an essential precursor for DNA biosynthesis. The polypeptide is Thymidylate synthase (Bartonella henselae (strain ATCC 49882 / DSM 28221 / CCUG 30454 / Houston 1) (Rochalimaea henselae)).